A 124-amino-acid chain; its full sequence is Small ribosomal subunit protein uS11 (124 aa).

It belongs to the universal ribosomal protein uS11 family. As to quaternary structure, part of the 30S ribosomal subunit.

Functionally, located on the platform of the 30S subunit. This Methanococcus aeolicus (strain ATCC BAA-1280 / DSM 17508 / OCM 812 / Nankai-3) protein is Small ribosomal subunit protein uS11.